A 414-amino-acid chain; its full sequence is Serine hydroxymethyltransferase (414 aa).

Residues L116 and 120–122 each bind (6S)-5,6,7,8-tetrahydrofolate; that span reads GHL. At K225 the chain carries N6-(pyridoxal phosphate)lysine. 349 to 351 is a (6S)-5,6,7,8-tetrahydrofolate binding site; sequence SPF.

The protein belongs to the SHMT family. In terms of assembly, homodimer. The cofactor is pyridoxal 5'-phosphate.

Its subcellular location is the cytoplasm. It catalyses the reaction (6R)-5,10-methylene-5,6,7,8-tetrahydrofolate + glycine + H2O = (6S)-5,6,7,8-tetrahydrofolate + L-serine. It functions in the pathway one-carbon metabolism; tetrahydrofolate interconversion. The protein operates within amino-acid biosynthesis; glycine biosynthesis; glycine from L-serine: step 1/1. In terms of biological role, catalyzes the reversible interconversion of serine and glycine with tetrahydrofolate (THF) serving as the one-carbon carrier. This reaction serves as the major source of one-carbon groups required for the biosynthesis of purines, thymidylate, methionine, and other important biomolecules. Also exhibits THF-independent aldolase activity toward beta-hydroxyamino acids, producing glycine and aldehydes, via a retro-aldol mechanism. In Oenococcus oeni (strain ATCC BAA-331 / PSU-1), this protein is Serine hydroxymethyltransferase.